We begin with the raw amino-acid sequence, 245 residues long: 8-amino-3,8-dideoxy-manno-octulosonate cytidylyltransferase (245 aa).

The protein belongs to the KdsB family.

It localises to the cytoplasm. The catalysed reaction is 8-amino-3,8-dideoxy-alpha-D-manno-octulosonate + CTP = CMP-8-amino-3,8-dideoxy-alpha-D-manno-oct-2-ulosonate + diphosphate. It participates in bacterial outer membrane biogenesis; lipopolysaccharide biosynthesis. Its function is as follows. Activates KDO8N (a required 8-carbon sugar) for incorporation into bacterial lipopolysaccharide in the Shewanella genus. This chain is 8-amino-3,8-dideoxy-manno-octulosonate cytidylyltransferase, found in Shewanella loihica (strain ATCC BAA-1088 / PV-4).